A 224-amino-acid polypeptide reads, in one-letter code: Thymidine kinase, cytosolic (224 aa).

Ser13 is modified (phosphoserine). Residues Gly26 to Ser33, Asp58 to Arg60, and Asp98 to Gln101 each bind ATP. Glu99 serves as the catalytic Proton acceptor. Substrate is bound at residue Phe129. The Zn(2+) site is built by Cys154 and Cys157. Substrate contacts are provided by residues Val173–Gly177 and Tyr182. Zn(2+) is bound by residues Cys186 and Cys189. Residues Lys203–Asn205 carry the KEN box motif.

This sequence belongs to the thymidine kinase family. In terms of assembly, homotetramer. Tetramerization from dimerization is induced by ATP and increases catalytic efficiency due to a high affinity for thymidine. Tetramerization is inhibited by phosphorylation at Ser-13. Interacts (via the KEN box) with FZR1. In terms of processing, phosphorylated on Ser-13 in mitosis. Phosphorylation of Ser-13 by CDK1 during mitosis reduces homotetramerization and catalytic efficiency when DNA replication is complete and intracellular TK1 is still present at a high level. Post-translationally, polyubiquitinated. Postmitosis, ubiquitination leads to proteasomal degradation. The KEN box sequence located at the C-terminal region targets for degradation by the anaphase promoting complex (APC/C) activated and rate-limited by FZR1.

It is found in the cytoplasm. It carries out the reaction thymidine + ATP = dTMP + ADP + H(+). In terms of biological role, cell-cycle-regulated enzyme of importance in nucleotide metabolism. Catalyzes the first enzymatic step in the salvage pathway converting thymidine into thymidine monophosphate. Transcriptional regulation limits expression to the S phase of the cell cycle and transient expression coincides with the oscillation in the intracellular dTTP concentration. This is Thymidine kinase, cytosolic (TK1) from Gallus gallus (Chicken).